A 118-amino-acid chain; its full sequence is Ribonuclease P protein component (118 aa).

Belongs to the RnpA family. Consists of a catalytic RNA component (M1 or rnpB) and a protein subunit.

It catalyses the reaction Endonucleolytic cleavage of RNA, removing 5'-extranucleotides from tRNA precursor.. Functionally, RNaseP catalyzes the removal of the 5'-leader sequence from pre-tRNA to produce the mature 5'-terminus. It can also cleave other RNA substrates such as 4.5S RNA. The protein component plays an auxiliary but essential role in vivo by binding to the 5'-leader sequence and broadening the substrate specificity of the ribozyme. The sequence is that of Ribonuclease P protein component from Rickettsia canadensis (strain McKiel).